Here is a 505-residue protein sequence, read N- to C-terminus: NADH-quinone oxidoreductase subunit N 1 (505 aa).

14 consecutive transmembrane segments (helical) span residues 18 to 38, 45 to 65, 84 to 104, 116 to 136, 138 to 158, 173 to 193, 223 to 243, 271 to 291, 292 to 312, 319 to 339, 345 to 365, 391 to 411, 429 to 449, and 473 to 493; these read LIPEIALGCLALLLLVVEMVL, LIATIAIIGQFGILGWVAWDF, YVGQAMRVFFLLSSIFVSILA, IEFYHIVLVATAAMMLLAQAN, FVLFFVALETLTVGLYILVSY, LIMGALSSSLLLFGIVLLYGV, FLAAAGIVLVLSGIAFKIGAF, AGFAILLVLVNSVFGPYWWLV, QPVLVAMAVATILFGNIAALT, LIGLSGVSHAGFLLIGIIASH, VGAVLFYLFAYLLATFAVFGV, FLAAILAVALGSLAGIPPLAG, GLLAVAIVGVVISIYYYFGWI, and VGAAAGVALATLALCSILFGV.

It belongs to the complex I subunit 2 family. As to quaternary structure, NDH-1 is composed of 14 different subunits. Subunits NuoA, H, J, K, L, M, N constitute the membrane sector of the complex.

The protein resides in the cell inner membrane. The enzyme catalyses a quinone + NADH + 5 H(+)(in) = a quinol + NAD(+) + 4 H(+)(out). NDH-1 shuttles electrons from NADH, via FMN and iron-sulfur (Fe-S) centers, to quinones in the respiratory chain. The immediate electron acceptor for the enzyme in this species is believed to be ubiquinone. Couples the redox reaction to proton translocation (for every two electrons transferred, four hydrogen ions are translocated across the cytoplasmic membrane), and thus conserves the redox energy in a proton gradient. The protein is NADH-quinone oxidoreductase subunit N 1 of Opitutus terrae (strain DSM 11246 / JCM 15787 / PB90-1).